The chain runs to 532 residues: Fatty aldehyde dehydrogenase HFD1 (532 aa).

The residue at position 111 (S111) is a Phosphoserine. The chain crosses the membrane as a helical span at residues I134–A152. Residue G214 to G219 participates in NAD(+) binding. Catalysis depends on residues E236 and C273.

The protein belongs to the aldehyde dehydrogenase family.

It is found in the lipid droplet. It localises to the mitochondrion outer membrane. Its subcellular location is the endosome membrane. The protein localises to the cytoplasmic granule membrane. The catalysed reaction is an aldehyde + NAD(+) + H2O = a carboxylate + NADH + 2 H(+). The enzyme catalyses hexadecanoate + NADH + 2 H(+) = hexadecanal + NAD(+) + H2O. It catalyses the reaction 4-hydroxybenzaldehyde + NAD(+) + H2O = 4-hydroxybenzoate + NADH + 2 H(+). Catalyzes the oxidation of long-chain aliphatic aldehydes to fatty acids. Responsible for conversion of the sphingosine 1-phosphate (S1P) degradation product hexadecenal to hexadecenoic acid. Involved in coenzyme Q (CoQ) biosynthesis, catalyzing the last step in the tyrosine to 4-hydroxybenzoate (4-HB) pathway. Oxidizes 4-hydroxybenzaldehyde (4-Hbz) to 4-HB, the aromatic precursor for coenzyme Q. The sequence is that of Fatty aldehyde dehydrogenase HFD1 (HFD1) from Saccharomyces cerevisiae (strain ATCC 204508 / S288c) (Baker's yeast).